Here is a 184-residue protein sequence, read N- to C-terminus: Urease accessory protein UreE (184 aa).

Residues 147–184 (EHHGHSHSHSHSHDHDHDHDHDHQHGPSCSHGHHHGHR) are disordered. A compositionally biased stretch (basic and acidic residues) spans 157–171 (HSHDHDHDHDHDHQH).

It belongs to the UreE family.

Its subcellular location is the cytoplasm. Its function is as follows. Involved in urease metallocenter assembly. Binds nickel. Probably functions as a nickel donor during metallocenter assembly. In Burkholderia mallei (strain ATCC 23344), this protein is Urease accessory protein UreE.